The sequence spans 299 residues: Putative transposase InsZ (299 aa).

Positions 276–291 (PSRPRSVKISKTRYPV) are enriched in basic residues. A disordered region spans residues 276–299 (PSRPRSVKISKTRYPVKHSAAPLK).

In Escherichia coli (strain K12), this protein is Putative transposase InsZ (insZ).